A 343-amino-acid polypeptide reads, in one-letter code: Glutamine synthetase (343 aa).

The GS beta-grasp domain occupies 3–87; sequence FKAEYIWIDG…CEVLNIDLTP (85 aa). The GS catalytic domain occupies 92–343; the sequence is TRAALAEVAE…CSALEKAGQV (252 aa). Mg(2+)-binding residues include Glu113, Glu115, Glu174, and Glu181. Residue Glu279 coordinates L-glutamate.

This sequence belongs to the glutamine synthetase family. Homooctamer and homotetramer. Mg(2+) is required as a cofactor.

The protein resides in the cytoplasm. It carries out the reaction L-glutamate + NH4(+) + ATP = L-glutamine + ADP + phosphate + H(+). Its function is as follows. Catalyzes the ATP-dependent biosynthesis of glutamine from glutamate and ammonia. This chain is Glutamine synthetase, found in Streptomyces viridochromogenes.